The primary structure comprises 366 residues: Chorismate synthase (366 aa).

NADP(+) is bound by residues arginine 48 and arginine 54. Residues 125-127 (RSS), 238-239 (NA), glycine 278, 293-297 (KPTSS), and arginine 319 each bind FMN.

Belongs to the chorismate synthase family. Homotetramer. FMNH2 is required as a cofactor.

The enzyme catalyses 5-O-(1-carboxyvinyl)-3-phosphoshikimate = chorismate + phosphate. The protein operates within metabolic intermediate biosynthesis; chorismate biosynthesis; chorismate from D-erythrose 4-phosphate and phosphoenolpyruvate: step 7/7. Its function is as follows. Catalyzes the anti-1,4-elimination of the C-3 phosphate and the C-6 proR hydrogen from 5-enolpyruvylshikimate-3-phosphate (EPSP) to yield chorismate, which is the branch point compound that serves as the starting substrate for the three terminal pathways of aromatic amino acid biosynthesis. This reaction introduces a second double bond into the aromatic ring system. The sequence is that of Chorismate synthase from Thiobacillus denitrificans (strain ATCC 25259 / T1).